The primary structure comprises 350 residues: fMet-Leu-Phe receptor (350 aa).

The Extracellular segment spans residues 1–27; that stretch reads METNSSLPTNISGGTPAVSAGYLFLDI. Asn4 and Asn10 each carry an N-linked (GlcNAc...) asparagine glycan. A helical membrane pass occupies residues 28-50; that stretch reads ITYLVFAVTFVLGVLGNGLVIWV. Over 51–61 the chain is Cytoplasmic; the sequence is AGFRMTHTVTT. The chain crosses the membrane as a helical span at residues 62 to 83; it reads ISYLNLAVADFCFTSTLPFFMV. Residues 84–100 are Extracellular-facing; it reads RKAMGGHWPFGWFLCKF. Cys98 and Cys176 are disulfide-bonded. The chain crosses the membrane as a helical span at residues 101 to 121; the sequence is VFTIVDINLFGSVFLIALIAL. The Cytoplasmic portion of the chain corresponds to 122–140; sequence DRCVCVLHPVWTQNHRTVS. Residues 141-162 traverse the membrane as a helical segment; the sequence is LAKKVIIGPWVMALLLTLPVII. At 163–205 the chain is on the extracellular side; that stretch reads RVTTVPGKTGTVACTFNFSPWTNDPKERINVAVAMLTVRGIIR. Residues 206–226 traverse the membrane as a helical segment; it reads FIIGFSAPMSIVAVSYGLIAT. Topologically, residues 227-242 are cytoplasmic; the sequence is KIHKQGLIKSSRPLRV. The helical transmembrane segment at 243–266 threads the bilayer; sequence LSFVAAAFFLCWSPYQVVALIATV. Residues 267–285 are Extracellular-facing; sequence RIRELLQGMYKEIGIAVDV. The helical transmembrane segment at 286–305 threads the bilayer; sequence TSALAFFNSCLNPMLYVFMG. The Cytoplasmic portion of the chain corresponds to 306–350; sequence QDFRERLIHALPASLERALTEDSTQTSDTATNSTLPSAEVELQAK. The segment at 325–350 is disordered; sequence TEDSTQTSDTATNSTLPSAEVELQAK. The span at 326–341 shows a compositional bias: polar residues; that stretch reads EDSTQTSDTATNSTLP. A Phosphoserine modification is found at Ser328. Residues Thr329 and Thr331 each carry the phosphothreonine modification. Ser332 is modified (phosphoserine). 2 positions are modified to phosphothreonine: Thr334 and Thr336. Ser338 carries the post-translational modification Phosphoserine. Phosphothreonine is present on Thr339.

The protein belongs to the G-protein coupled receptor 1 family. As to quaternary structure, interacts with S.aureus chemotaxis inhibitory protein (CHIPS); the interaction blocks the receptor and may thus inhibit the immune response. Post-translationally, phosphorylated; which is necessary for desensitization. As to expression, neutrophils.

The protein resides in the cell membrane. Its function is as follows. High affinity receptor for N-formyl-methionyl peptides (fMLP), which are powerful neutrophil chemotactic factors. Binding of fMLP to the receptor stimulates intracellular calcium mobilization and superoxide anion release. This response is mediated via a G-protein that activates a phosphatidylinositol-calcium second messenger system. Receptor for TAFA4, mediates its effects on chemoattracting macrophages, promoting phagocytosis and increasing ROS release. Receptor for cathepsin CTSG, leading to increased phagocyte chemotaxis. In Homo sapiens (Human), this protein is fMet-Leu-Phe receptor (FPR1).